Consider the following 494-residue polypeptide: GTPase Der (494 aa).

EngA-type G domains lie at proline 3 to glutamate 166 and isoleucine 207 to threonine 380. Residues glycine 9–serine 16, aspartate 56–isoleucine 60, asparagine 118–aspartate 121, glycine 213–serine 220, aspartate 260–valine 264, and asparagine 325–aspartate 328 each bind GTP. A KH-like domain is found at lysine 381–glutamate 465.

The protein belongs to the TRAFAC class TrmE-Era-EngA-EngB-Septin-like GTPase superfamily. EngA (Der) GTPase family. Associates with the 50S ribosomal subunit.

GTPase that plays an essential role in the late steps of ribosome biogenesis. This chain is GTPase Der, found in Yersinia enterocolitica serotype O:8 / biotype 1B (strain NCTC 13174 / 8081).